We begin with the raw amino-acid sequence, 103 residues long: Sec-independent protein translocase protein TatA (103 aa).

The chain crosses the membrane as a helical span at residues 1-21 (MGNIFSPTHLIIILLLILLLF). Positions 48-103 (EESIEDKVEMADTSQVINEESQQSQPLSVKRAAIRRKASSDSKGGKASIAKKQRVK) are disordered. The segment covering 59-74 (DTSQVINEESQQSQPL) has biased composition (polar residues).

Belongs to the TatA/E family. The Tat system comprises two distinct complexes: a TatABC complex, containing multiple copies of TatA, TatB and TatC subunits, and a separate TatA complex, containing only TatA subunits. Substrates initially bind to the TatABC complex, which probably triggers association of the separate TatA complex to form the active translocon.

It localises to the cell inner membrane. In terms of biological role, part of the twin-arginine translocation (Tat) system that transports large folded proteins containing a characteristic twin-arginine motif in their signal peptide across membranes. TatA could form the protein-conducting channel of the Tat system. This chain is Sec-independent protein translocase protein TatA, found in Bartonella tribocorum (strain CIP 105476 / IBS 506).